The chain runs to 323 residues: Acetyl-coenzyme A carboxylase carboxyl transferase subunit alpha (323 aa).

The 258-residue stretch at 36–293 (ELELLSAKAQ…KEEVVKNLQI (258 aa)) folds into the CoA carboxyltransferase C-terminal domain.

It belongs to the AccA family. Acetyl-CoA carboxylase is a heterohexamer composed of biotin carboxyl carrier protein (AccB), biotin carboxylase (AccC) and two subunits each of ACCase subunit alpha (AccA) and ACCase subunit beta (AccD).

It localises to the cytoplasm. It carries out the reaction N(6)-carboxybiotinyl-L-lysyl-[protein] + acetyl-CoA = N(6)-biotinyl-L-lysyl-[protein] + malonyl-CoA. The protein operates within lipid metabolism; malonyl-CoA biosynthesis; malonyl-CoA from acetyl-CoA: step 1/1. In terms of biological role, component of the acetyl coenzyme A carboxylase (ACC) complex. First, biotin carboxylase catalyzes the carboxylation of biotin on its carrier protein (BCCP) and then the CO(2) group is transferred by the carboxyltransferase to acetyl-CoA to form malonyl-CoA. The protein is Acetyl-coenzyme A carboxylase carboxyl transferase subunit alpha of Carboxydothermus hydrogenoformans (strain ATCC BAA-161 / DSM 6008 / Z-2901).